We begin with the raw amino-acid sequence, 387 residues long: F420-dependent formate dehydrogenase 1 subunit beta (387 aa).

2 consecutive 4Fe-4S ferredoxin-type domains span residues 275–298 (TIEEWNRQWNKCIKCYGCRDVCPV) and 326–355 (VRMSHMAFSCVNCGQCEDVCPMEIPVARIF). [4Fe-4S] cluster contacts are provided by Cys-286, Cys-289, Cys-292, Cys-296, Cys-335, Cys-338, Cys-341, and Cys-345. The segment at 366–387 (LGYRPGVDDEAPPALGGSCPTQ) is disordered.

This sequence belongs to the FrhB family. Dimer of an alpha (FdhA1) and a beta (FdhB1) subunit. [4Fe-4S] cluster is required as a cofactor. Requires FAD as cofactor. It depends on Zn(2+) as a cofactor.

It carries out the reaction oxidized coenzyme F420-(gamma-L-Glu)(n) + formate + 2 H(+) = reduced coenzyme F420-(gamma-L-Glu)(n) + CO2. Functionally, catalyzes the oxidation of formate to carbon dioxide, with coenzyme F420 as the electron acceptor. In vitro can also use methyl viologen as electron acceptor. In Methanococcus maripaludis (strain DSM 14266 / JCM 13030 / NBRC 101832 / S2 / LL), this protein is F420-dependent formate dehydrogenase 1 subunit beta.